We begin with the raw amino-acid sequence, 142 residues long: Large ribosomal subunit protein uL13 (142 aa).

The protein belongs to the universal ribosomal protein uL13 family. As to quaternary structure, part of the 50S ribosomal subunit.

Functionally, this protein is one of the early assembly proteins of the 50S ribosomal subunit, although it is not seen to bind rRNA by itself. It is important during the early stages of 50S assembly. The polypeptide is Large ribosomal subunit protein uL13 (Caldicellulosiruptor saccharolyticus (strain ATCC 43494 / DSM 8903 / Tp8T 6331)).